The sequence spans 88 residues: Small ribosomal subunit protein uS15 (88 aa).

It belongs to the universal ribosomal protein uS15 family. As to quaternary structure, part of the 30S ribosomal subunit. Forms a bridge to the 50S subunit in the 70S ribosome, contacting the 23S rRNA.

Its function is as follows. One of the primary rRNA binding proteins, it binds directly to 16S rRNA where it helps nucleate assembly of the platform of the 30S subunit by binding and bridging several RNA helices of the 16S rRNA. Functionally, forms an intersubunit bridge (bridge B4) with the 23S rRNA of the 50S subunit in the ribosome. The protein is Small ribosomal subunit protein uS15 of Caldicellulosiruptor saccharolyticus (strain ATCC 43494 / DSM 8903 / Tp8T 6331).